A 428-amino-acid polypeptide reads, in one-letter code: 3-phosphoshikimate 1-carboxyvinyltransferase (428 aa).

3 residues coordinate 3-phosphoshikimate: Lys-21, Ser-22, and Arg-26. Lys-21 lines the phosphoenolpyruvate pocket. The phosphoenolpyruvate site is built by Gly-93 and Arg-121. Positions 166, 168, 314, and 341 each coordinate 3-phosphoshikimate. Gln-168 is a phosphoenolpyruvate binding site. Asp-314 serves as the catalytic Proton acceptor. Residues Arg-345 and Arg-388 each coordinate phosphoenolpyruvate.

Belongs to the EPSP synthase family. In terms of assembly, monomer.

The protein localises to the cytoplasm. The catalysed reaction is 3-phosphoshikimate + phosphoenolpyruvate = 5-O-(1-carboxyvinyl)-3-phosphoshikimate + phosphate. It functions in the pathway metabolic intermediate biosynthesis; chorismate biosynthesis; chorismate from D-erythrose 4-phosphate and phosphoenolpyruvate: step 6/7. In terms of biological role, catalyzes the transfer of the enolpyruvyl moiety of phosphoenolpyruvate (PEP) to the 5-hydroxyl of shikimate-3-phosphate (S3P) to produce enolpyruvyl shikimate-3-phosphate and inorganic phosphate. This is 3-phosphoshikimate 1-carboxyvinyltransferase from Syntrophomonas wolfei subsp. wolfei (strain DSM 2245B / Goettingen).